We begin with the raw amino-acid sequence, 166 residues long: Cyclic pyranopterin monophosphate synthase (166 aa).

Substrate contacts are provided by residues 75-77 and 115-116; these read MCH and ME. Aspartate 130 is an active-site residue.

This sequence belongs to the MoaC family. Homohexamer; trimer of dimers.

It catalyses the reaction (8S)-3',8-cyclo-7,8-dihydroguanosine 5'-triphosphate = cyclic pyranopterin phosphate + diphosphate. The protein operates within cofactor biosynthesis; molybdopterin biosynthesis. Functionally, catalyzes the conversion of (8S)-3',8-cyclo-7,8-dihydroguanosine 5'-triphosphate to cyclic pyranopterin monophosphate (cPMP). The protein is Cyclic pyranopterin monophosphate synthase of Shouchella clausii (strain KSM-K16) (Alkalihalobacillus clausii).